A 328-amino-acid polypeptide reads, in one-letter code: Flap endonuclease 1 (328 aa).

The tract at residues 1 to 98 (MGVKFKDITN…ETQEERINIK (98 aa)) is N-domain. 7 residues coordinate Mg(2+): Asp-27, Asp-80, Glu-152, Glu-154, Asp-173, Asp-175, and Asp-227. The tract at residues 116 to 248 (AARKYAARTT…KGIKLIHKYG (133 aa)) is I-domain. The tract at residues 320–328 (AQSSLEDWF) is interaction with PCNA.

It belongs to the XPG/RAD2 endonuclease family. FEN1 subfamily. In terms of assembly, interacts with PCNA. PCNA stimulates the nuclease activity without altering cleavage specificity. Mg(2+) is required as a cofactor.

In terms of biological role, structure-specific nuclease with 5'-flap endonuclease and 5'-3' exonuclease activities involved in DNA replication and repair. During DNA replication, cleaves the 5'-overhanging flap structure that is generated by displacement synthesis when DNA polymerase encounters the 5'-end of a downstream Okazaki fragment. Binds the unpaired 3'-DNA end and kinks the DNA to facilitate 5' cleavage specificity. Cleaves one nucleotide into the double-stranded DNA from the junction in flap DNA, leaving a nick for ligation. Also involved in the base excision repair (BER) pathway. Acts as a genome stabilization factor that prevents flaps from equilibrating into structures that lead to duplications and deletions. Also possesses 5'-3' exonuclease activity on nicked or gapped double-stranded DNA. The chain is Flap endonuclease 1 from Methanosphaera stadtmanae (strain ATCC 43021 / DSM 3091 / JCM 11832 / MCB-3).